The primary structure comprises 74 residues: Exodeoxyribonuclease 7 small subunit (74 aa).

It belongs to the XseB family. As to quaternary structure, heterooligomer composed of large and small subunits.

Its subcellular location is the cytoplasm. The enzyme catalyses Exonucleolytic cleavage in either 5'- to 3'- or 3'- to 5'-direction to yield nucleoside 5'-phosphates.. Bidirectionally degrades single-stranded DNA into large acid-insoluble oligonucleotides, which are then degraded further into small acid-soluble oligonucleotides. This chain is Exodeoxyribonuclease 7 small subunit, found in Neisseria gonorrhoeae (strain ATCC 700825 / FA 1090).